The primary structure comprises 162 residues: Nucleotide-binding protein AnaeK_0101 (162 aa).

This sequence belongs to the YajQ family.

Nucleotide-binding protein. The protein is Nucleotide-binding protein AnaeK_0101 of Anaeromyxobacter sp. (strain K).